The following is a 305-amino-acid chain: Serine/threonine-protein kinase 16 (305 aa).

Residue Gly-2 is the site of N-myristoyl glycine attachment. Residues Cys-6 and Cys-8 are each lipidated (S-palmitoyl cysteine). Positions 20-293 (YLFVQKLGEG…PVLLSQLEAL (274 aa)) constitute a Protein kinase domain. Residues 26–34 (LGEGGFSYV) and Lys-49 contribute to the ATP site. Asp-148 acts as the Proton acceptor in catalysis. The interval 166 to 202 (DLGSMNQACIQVEGSRQALALQDWAAQRCTISYRAPE) is activation loop. A Phosphoserine; by autocatalysis modification is found at Ser-197. Tyr-198 carries the phosphotyrosine; by autocatalysis modification.

This sequence belongs to the protein kinase superfamily. Ser/Thr protein kinase family. In terms of assembly, monomer. Interacts with DRG1 (via its N-terminal); the interaction phosphorylates DRG1. Post-translationally, mainly autophosphorylated on serine/threonine residues. Also autophosphorylated on Tyr-198. Ubiquitously expressed at low levels. Relatively higher levels in testis, kidney and liver.

The protein localises to the cytoplasm. Its subcellular location is the perinuclear region. It is found in the membrane. It catalyses the reaction L-seryl-[protein] + ATP = O-phospho-L-seryl-[protein] + ADP + H(+). It carries out the reaction L-threonyl-[protein] + ATP = O-phospho-L-threonyl-[protein] + ADP + H(+). The catalysed reaction is L-tyrosyl-[protein] + ATP = O-phospho-L-tyrosyl-[protein] + ADP + H(+). Its function is as follows. Membrane-associated protein kinase that phosphorylates on serine and threonine residues. In vitro substrates include DRG1, ENO1 and EIF4EBP1. Also autophosphorylates. May be involved in secretory vesicle trafficking or intracellular signaling. May have a role in regulating stromal-epithelial interactions that occur during ductal morphogenesis in the mammary gland. May be involved in TGF-beta signaling. Able to autophosphorylate on Tyr residue; it is however unclear whether it has tyrosine-protein kinase toward other proteins. The polypeptide is Serine/threonine-protein kinase 16 (Stk16) (Mus musculus (Mouse)).